We begin with the raw amino-acid sequence, 963 residues long: Iron-responsive element-binding protein 2 (963 aa).

The [4Fe-4S] cluster site is built by cysteine 512, cysteine 578, and cysteine 581.

Belongs to the aconitase/IPM isomerase family. Interacts with RBCK1 isoform 1 and isoform 2 only in iron-rich conditions. Interacts (when associated with the 4Fe-4S) with FBXL5. Interacts with CIAO1 and CIAO2A. [4Fe-4S] cluster serves as cofactor. In terms of processing, ubiquitinated and degraded by the proteasome in presence of high level of iron and oxygen. Ubiquitinated by a SCF complex containing FBXL5. Upon iron and oxygen depletion FBXL5 is degraded, preventing ubiquitination and allowing its RNA-binding activity.

Its subcellular location is the cytoplasm. RNA-binding protein that binds to iron-responsive elements (IRES), which are stem-loop structures found in the 5'-UTR of ferritin, and delta aminolevulinic acid synthase mRNAs, and in the 3'-UTR of transferrin receptor mRNA. Binding to the IRE element in ferritin results in the repression of its mRNA translation. Binding of the protein to the transferrin receptor mRNA inhibits the degradation of this otherwise rapidly degraded mRNA. This is Iron-responsive element-binding protein 2 (IREB2) from Homo sapiens (Human).